The sequence spans 976 residues: Dibasic-processing endoprotease (976 aa).

The first 17 residues, 1-17 (MLRKFILGLLLASQAVA), serve as a signal peptide directing secretion. Asn-156 is a glycosylation site (N-linked (GlcNAc...) asparagine). Basic and acidic residues predominate over residues 172–212 (AEEAQKAQDDKGDKKEDQKDDKKEGQEAQKEGDKEDNKGDD). A disordered region spans residues 172–246 (AEEAQKAQDD…VQWKPVDESM (75 aa)). The segment covering 213–231 (KEDGEEDDDDDEDEDDDDA) has biased composition (acidic residues). The 319-residue stretch at 277 to 595 (QWYLHNVHKA…YGKLDASKIV (319 aa)) folds into the Peptidase S8 domain. 2 N-linked (GlcNAc...) asparagine glycosylation sites follow: Asn-291 and Asn-299. Asp-311 (charge relay system) is an active-site residue. Asn-336 carries N-linked (GlcNAc...) asparagine glycosylation. Catalysis depends on charge relay system residues His-349 and Ser-528. The helical transmembrane segment at 524–544 (HGGTSAAAPLAAGVFALALSV) threads the bilayer. The region spanning 604–737 (VNNQTSFHSE…QLNVFGEQKD (134 aa)) is the P/Homo B domain. Residue Asn-606 is glycosylated (N-linked (GlcNAc...) asparagine). The disordered stretch occupies residues 733-848 (GEQKDKREEN…SDSHTSWWPD (116 aa)). Basic and acidic residues predominate over residues 734 to 830 (EQKDKREENK…EEKPEEKPVD (97 aa)). The helical transmembrane segment at 855-875 (AWLYGAVLLVGGFIAVIGIYA) threads the bilayer. Asn-886 carries an N-linked (GlcNAc...) asparagine glycan. The disordered stretch occupies residues 914–976 (PEDTHRRSGD…RDNDRQNLLG (63 aa)). 2 stretches are compositionally biased toward basic and acidic residues: residues 915-928 (EDTH…DRLY) and 940-976 (MFRI…NLLG).

It belongs to the peptidase S8 family. Furin subfamily.

The protein localises to the membrane. The sequence is that of Dibasic-processing endoprotease (XPR6) from Yarrowia lipolytica (strain CLIB 122 / E 150) (Yeast).